Reading from the N-terminus, the 426-residue chain is Serine--tRNA ligase (426 aa).

Residue 231-233 coordinates L-serine; it reads TSE. Position 262 to 264 (262 to 264) interacts with ATP; it reads RSE. Glu-285 is a binding site for L-serine. 349–352 serves as a coordination point for ATP; the sequence is EISS. Ser-385 provides a ligand contact to L-serine.

It belongs to the class-II aminoacyl-tRNA synthetase family. Type-1 seryl-tRNA synthetase subfamily. As to quaternary structure, homodimer. The tRNA molecule binds across the dimer.

The protein resides in the cytoplasm. The catalysed reaction is tRNA(Ser) + L-serine + ATP = L-seryl-tRNA(Ser) + AMP + diphosphate + H(+). The enzyme catalyses tRNA(Sec) + L-serine + ATP = L-seryl-tRNA(Sec) + AMP + diphosphate + H(+). It functions in the pathway aminoacyl-tRNA biosynthesis; selenocysteinyl-tRNA(Sec) biosynthesis; L-seryl-tRNA(Sec) from L-serine and tRNA(Sec): step 1/1. Functionally, catalyzes the attachment of serine to tRNA(Ser). Is also able to aminoacylate tRNA(Sec) with serine, to form the misacylated tRNA L-seryl-tRNA(Sec), which will be further converted into selenocysteinyl-tRNA(Sec). This Legionella pneumophila (strain Lens) protein is Serine--tRNA ligase.